The sequence spans 163 residues: D-aminoacyl-tRNA deacylase (163 aa).

The Gly-cisPro motif, important for rejection of L-amino acids motif lies at 141–142 (GP).

This sequence belongs to the DTD family. Homodimer.

It localises to the cytoplasm. The enzyme catalyses glycyl-tRNA(Ala) + H2O = tRNA(Ala) + glycine + H(+). It catalyses the reaction a D-aminoacyl-tRNA + H2O = a tRNA + a D-alpha-amino acid + H(+). In terms of biological role, an aminoacyl-tRNA editing enzyme that deacylates mischarged D-aminoacyl-tRNAs. Also deacylates mischarged glycyl-tRNA(Ala), protecting cells against glycine mischarging by AlaRS. Acts via tRNA-based rather than protein-based catalysis; rejects L-amino acids rather than detecting D-amino acids in the active site. By recycling D-aminoacyl-tRNA to D-amino acids and free tRNA molecules, this enzyme counteracts the toxicity associated with the formation of D-aminoacyl-tRNA entities in vivo and helps enforce protein L-homochirality. The protein is D-aminoacyl-tRNA deacylase of Neisseria meningitidis serogroup B (strain ATCC BAA-335 / MC58).